The chain runs to 142 residues: Large ribosomal subunit protein uL13 (142 aa).

It belongs to the universal ribosomal protein uL13 family. As to quaternary structure, part of the 50S ribosomal subunit.

In terms of biological role, this protein is one of the early assembly proteins of the 50S ribosomal subunit, although it is not seen to bind rRNA by itself. It is important during the early stages of 50S assembly. This is Large ribosomal subunit protein uL13 from Trichlorobacter lovleyi (strain ATCC BAA-1151 / DSM 17278 / SZ) (Geobacter lovleyi).